Here is a 566-residue protein sequence, read N- to C-terminus: Serine/threonine-protein kinase PknE (566 aa).

Residues 1 to 337 are Cytoplasmic-facing; sequence MDGTAESREG…PLPRSARQPW (337 aa). Ser-7 bears the Phosphoserine; by autocatalysis mark. Thr-11 carries the phosphothreonine; by autocatalysis modification. Residues 16–275 form the Protein kinase domain; it reads YRLRRLVGRG…DLSAAAHAAL (260 aa). ATP is bound by residues 22-30 and Lys-45; that span reads VGRGGMGDV. Thr-50 and Thr-59 each carry phosphothreonine; by autocatalysis. Asp-139 serves as the catalytic Proton acceptor. Thr-170, Thr-175, and Thr-178 each carry phosphothreonine; by autocatalysis. A disordered region spans residues 296-330; it reads PVPSTHPVSPGTRWPQPTPWAGGAPPWGPPSSPLP. The helical transmembrane segment at 338 to 358 threads the bilayer; the sequence is LWVGVAVAVVVALAGGLGIAL. Over 359-566 the chain is Extracellular; it reads AHPWRSSGPR…DPSWLARLIG (208 aa).

This sequence belongs to the protein kinase superfamily. Ser/Thr protein kinase family. Autophosphorylated on serine and threonine residues. Dephosphorylated by PstP.

The protein localises to the cell membrane. The enzyme catalyses L-seryl-[protein] + ATP = O-phospho-L-seryl-[protein] + ADP + H(+). It carries out the reaction L-threonyl-[protein] + ATP = O-phospho-L-threonyl-[protein] + ADP + H(+). This Mycobacterium bovis (strain ATCC BAA-935 / AF2122/97) protein is Serine/threonine-protein kinase PknE (pknE).